The primary structure comprises 199 residues: Cytochrome c oxidase subunit 2 (199 aa).

The chain crosses the membrane as a helical span at residues 1–13; that stretch reads AICSLVLYLLTLM. The Mitochondrial matrix portion of the chain corresponds to 14–26; it reads LMEKLSSNTVDAQ. Residues 27–54 form a helical membrane-spanning segment; that stretch reads EVELIWTILPAIVLILLALPSLQILYMM. Over 55-199 the chain is Mitochondrial intermembrane; the sequence is DEIDEPDLTL…SSLLSASSSL (145 aa). Cu cation is bound by residues His-128, Cys-163, Glu-165, Cys-167, His-171, and Met-174. Glu-165 provides a ligand contact to Mg(2+).

This sequence belongs to the cytochrome c oxidase subunit 2 family. Component of the cytochrome c oxidase (complex IV, CIV), a multisubunit enzyme composed of 14 subunits. The complex is composed of a catalytic core of 3 subunits MT-CO1, MT-CO2 and MT-CO3, encoded in the mitochondrial DNA, and 11 supernumerary subunits COX4I, COX5A, COX5B, COX6A, COX6B, COX6C, COX7A, COX7B, COX7C, COX8 and NDUFA4, which are encoded in the nuclear genome. The complex exists as a monomer or a dimer and forms supercomplexes (SCs) in the inner mitochondrial membrane with NADH-ubiquinone oxidoreductase (complex I, CI) and ubiquinol-cytochrome c oxidoreductase (cytochrome b-c1 complex, complex III, CIII), resulting in different assemblies (supercomplex SCI(1)III(2)IV(1) and megacomplex MCI(2)III(2)IV(2)). Found in a complex with TMEM177, COA6, COX18, COX20, SCO1 and SCO2. Interacts with TMEM177 in a COX20-dependent manner. Interacts with COX20. Interacts with COX16. The cofactor is Cu cation.

The protein resides in the mitochondrion inner membrane. The enzyme catalyses 4 Fe(II)-[cytochrome c] + O2 + 8 H(+)(in) = 4 Fe(III)-[cytochrome c] + 2 H2O + 4 H(+)(out). Functionally, component of the cytochrome c oxidase, the last enzyme in the mitochondrial electron transport chain which drives oxidative phosphorylation. The respiratory chain contains 3 multisubunit complexes succinate dehydrogenase (complex II, CII), ubiquinol-cytochrome c oxidoreductase (cytochrome b-c1 complex, complex III, CIII) and cytochrome c oxidase (complex IV, CIV), that cooperate to transfer electrons derived from NADH and succinate to molecular oxygen, creating an electrochemical gradient over the inner membrane that drives transmembrane transport and the ATP synthase. Cytochrome c oxidase is the component of the respiratory chain that catalyzes the reduction of oxygen to water. Electrons originating from reduced cytochrome c in the intermembrane space (IMS) are transferred via the dinuclear copper A center (CU(A)) of subunit 2 and heme A of subunit 1 to the active site in subunit 1, a binuclear center (BNC) formed by heme A3 and copper B (CU(B)). The BNC reduces molecular oxygen to 2 water molecules using 4 electrons from cytochrome c in the IMS and 4 protons from the mitochondrial matrix. This Dromaius novaehollandiae (Emu) protein is Cytochrome c oxidase subunit 2 (MT-CO2).